A 77-amino-acid chain; its full sequence is ATP synthase subunit c (77 aa).

2 consecutive transmembrane segments (helical) span residues 7–27 and 57–77; these read AFKYLAASIAAGLAALAAALG and VGLIEAVPILAIVVAFLILFL.

Belongs to the ATPase C chain family. F-type ATPases have 2 components, F(1) - the catalytic core - and F(0) - the membrane proton channel. F(1) has five subunits: alpha(3), beta(3), gamma(1), delta(1), epsilon(1). F(0) has three main subunits: a(1), b(2) and c(10-14). The alpha and beta chains form an alternating ring which encloses part of the gamma chain. F(1) is attached to F(0) by a central stalk formed by the gamma and epsilon chains, while a peripheral stalk is formed by the delta and b chains.

It localises to the cell membrane. F(1)F(0) ATP synthase produces ATP from ADP in the presence of a proton or sodium gradient. F-type ATPases consist of two structural domains, F(1) containing the extramembraneous catalytic core and F(0) containing the membrane proton channel, linked together by a central stalk and a peripheral stalk. During catalysis, ATP synthesis in the catalytic domain of F(1) is coupled via a rotary mechanism of the central stalk subunits to proton translocation. In terms of biological role, key component of the F(0) channel; it plays a direct role in translocation across the membrane. A homomeric c-ring of between 10-14 subunits forms the central stalk rotor element with the F(1) delta and epsilon subunits. The chain is ATP synthase subunit c from Lactobacillus helveticus (strain DPC 4571).